Consider the following 397-residue polypeptide: Subtilisin-like protease 3 (397 aa).

The signal sequence occupies residues 1–19; that stretch reads MGCIKVISVFLAAVAAVDA. A propeptide spanning residues 20 to 116 is cleaved from the precursor; sequence RAFFHNRGGN…VEHDRVVKLA (97 aa). One can recognise an Inhibitor I9 domain in the interval 35-116; sequence SYIVVMKDGV…VEHDRVVKLA (82 aa). Positions 126–397 constitute a Peptidase S8 domain; the sequence is TWGLGRVSHK…NKLLYNGSGR (272 aa). Residues D158 and H189 each act as charge relay system in the active site. N-linked (GlcNAc...) asparagine glycosylation is present at N250. The active-site Charge relay system is S344. The N-linked (GlcNAc...) asparagine glycan is linked to N393.

This sequence belongs to the peptidase S8 family.

It is found in the secreted. Its function is as follows. Secreted subtilisin-like serine protease with keratinolytic activity that contributes to pathogenicity. The protein is Subtilisin-like protease 3 (SUB3) of Arthroderma otae (strain ATCC MYA-4605 / CBS 113480) (Microsporum canis).